Reading from the N-terminus, the 418-residue chain is Trans-acting enoyl reductase (418 aa).

The protein belongs to the saccharopine dehydrogenase family. Enoyl reductase subfamily.

Its function is as follows. Involved in the reduction of the double bond between C-4 and C-5 during phthiocerol dimycocerosates (DIM A) and glycosylated phenolphthiocerol dimycocerosates (PGL) biosynthesis. The chain is Trans-acting enoyl reductase from Mycobacterium leprae (strain TN).